The chain runs to 194 residues: MAQKTETAIPSNSKARFETLYREKVTKALSERFGYKNVMNIPRLQKISINIGVGEAASEPKLLETAIQELAQITGQKPQIRKSKKAISNFKLREGQAIGCRVTLRRKAMYEFFDRFVSLAVPRIRDFRGLSDTSFDGRGNYTIGVREQIIFPEIDIDKIPKICGMDISFVTSAKTDEEAYVLLAELGMPFKKKN.

The protein belongs to the universal ribosomal protein uL5 family. In terms of assembly, part of the 50S ribosomal subunit; part of the 5S rRNA/L5/L18/L25 subcomplex. Contacts the 5S rRNA and the P site tRNA. Forms a bridge to the 30S subunit in the 70S ribosome.

Functionally, this is one of the proteins that bind and probably mediate the attachment of the 5S RNA into the large ribosomal subunit, where it forms part of the central protuberance. In the 70S ribosome it contacts protein S13 of the 30S subunit (bridge B1b), connecting the 2 subunits; this bridge is implicated in subunit movement. Contacts the P site tRNA; the 5S rRNA and some of its associated proteins might help stabilize positioning of ribosome-bound tRNAs. This Chlorobium luteolum (strain DSM 273 / BCRC 81028 / 2530) (Pelodictyon luteolum) protein is Large ribosomal subunit protein uL5.